We begin with the raw amino-acid sequence, 552 residues long: Chaperonin GroEL (552 aa).

ATP is bound by residues 30-33 (TLGP), Lys-51, 87-91 (DGTTT), Gly-415, 480-482 (NAA), and Asp-496.

This sequence belongs to the chaperonin (HSP60) family. Forms a cylinder of 14 subunits composed of two heptameric rings stacked back-to-back. Interacts with the co-chaperonin GroES.

It localises to the cytoplasm. The enzyme catalyses ATP + H2O + a folded polypeptide = ADP + phosphate + an unfolded polypeptide.. Together with its co-chaperonin GroES, plays an essential role in assisting protein folding. The GroEL-GroES system forms a nano-cage that allows encapsulation of the non-native substrate proteins and provides a physical environment optimized to promote and accelerate protein folding. This Coxiella burnetii (strain RSA 331 / Henzerling II) protein is Chaperonin GroEL.